The sequence spans 152 residues: SsrA-binding protein (152 aa).

It belongs to the SmpB family.

It is found in the cytoplasm. Required for rescue of stalled ribosomes mediated by trans-translation. Binds to transfer-messenger RNA (tmRNA), required for stable association of tmRNA with ribosomes. tmRNA and SmpB together mimic tRNA shape, replacing the anticodon stem-loop with SmpB. tmRNA is encoded by the ssrA gene; the 2 termini fold to resemble tRNA(Ala) and it encodes a 'tag peptide', a short internal open reading frame. During trans-translation Ala-aminoacylated tmRNA acts like a tRNA, entering the A-site of stalled ribosomes, displacing the stalled mRNA. The ribosome then switches to translate the ORF on the tmRNA; the nascent peptide is terminated with the 'tag peptide' encoded by the tmRNA and targeted for degradation. The ribosome is freed to recommence translation, which seems to be the essential function of trans-translation. The polypeptide is SsrA-binding protein (Rickettsia akari (strain Hartford)).